We begin with the raw amino-acid sequence, 774 residues long: Ent-beyerene synthase KSL4, chloroplastic (774 aa).

The N-terminal 35 residues, 1-35, are a transit peptide targeting the chloroplast; it reads MLLGSTNTLRISSHGKEWEGKTLTGMPLGKVNQRV. Residues Asp-525, Asp-529, Asn-668, Asp-669, Thr-672, and Glu-676 each coordinate Mg(2+). The DDXXD motif signature appears at 525-529; the sequence is DDFFD.

Belongs to the terpene synthase family. Mg(2+) serves as cofactor.

It localises to the plastid. Its subcellular location is the chloroplast. The catalysed reaction is ent-copalyl diphosphate = ent-beyerene + diphosphate. The enzyme catalyses ent-copalyl diphosphate = ent-atiserene + diphosphate. It carries out the reaction ent-copalyl diphosphate = ent-kaur-16-ene + diphosphate. It functions in the pathway secondary metabolite biosynthesis; terpenoid biosynthesis. Diterpene cyclase involved in the biosynthesis of labdane-related diterpenoids (LRDs) natural products. Catalyzes the cyclization of ent-CDP into ent-beyerene as a major and ent-kaurene and ent-atiserene as minor products. This chain is Ent-beyerene synthase KSL4, chloroplastic, found in Ricinus communis (Castor bean).